A 105-amino-acid polypeptide reads, in one-letter code: RxLR effector protein PITG_18670 (105 aa).

Residues 1–21 form the signal peptide; the sequence is MRSIFYFALAFAALTCSNASA. Residues 39–57 carry the RxLR-dEER motif; sequence RSLRVAGQEVARGDRGEEI.

This sequence belongs to the RxLR effector family.

The protein localises to the secreted. Its subcellular location is the host nucleus. The protein resides in the host nucleolus. It is found in the host cytoplasm. Functionally, effector that enhances P.infestans colonization of Nicotiana benthamiana leaves. This Phytophthora infestans (strain T30-4) (Potato late blight agent) protein is RxLR effector protein PITG_18670.